A 122-amino-acid polypeptide reads, in one-letter code: Large ribosomal subunit protein uL14 (122 aa).

Belongs to the universal ribosomal protein uL14 family. As to quaternary structure, part of the 50S ribosomal subunit. Forms a cluster with proteins L3 and L19. In the 70S ribosome, L14 and L19 interact and together make contacts with the 16S rRNA in bridges B5 and B8.

Binds to 23S rRNA. Forms part of two intersubunit bridges in the 70S ribosome. This chain is Large ribosomal subunit protein uL14, found in Xylella fastidiosa (strain 9a5c).